Reading from the N-terminus, the 423-residue chain is Progestin and adipoQ receptor-like protein 1 (423 aa).

At 1-201 (MDPDEVNQAL…KSIWSLHTET (201 aa)) the chain is on the cytoplasmic side. Residues 54–140 (VVSPTNSDDE…DEDELEVDVK (87 aa)) are disordered. Residues 60 to 69 (SDDEEGEFCS) are compositionally biased toward acidic residues. Basic residues predominate over residues 104–114 (TVLRYRRKKGG). Residues 202–222 (GNIWTHLIGCVAFFLLACWFL) traverse the membrane as a helical segment. The Extracellular segment spans residues 223–234 (TRPDNHIQFQEK). A helical transmembrane segment spans residues 235 to 252 (VVFSFFFAGAVSVSDSRS). Residues 253 to 288 (PSTPSRVIRSTSSRYSANSTIWESRCSLSARLFQPK) are Cytoplasmic-facing. The helical transmembrane segment at 289–309 (ITYIAMVCVLGIGAIVVSLWD) threads the bilayer. Residues 310–320 (KFSESKYRPVR) are Extracellular-facing. Residues 321-341 (AAVFVGMGCSGVIPTIHYIIT) form a helical membrane-spanning segment. Over 342 to 351 (DGVHSLFADN) the chain is Cytoplasmic. The helical transmembrane segment at 352 to 372 (SFHWLLLMAFLYLLGAALYAT) threads the bilayer. Over 373–392 (RTPERFFPGKCDIWFQSHQL) the chain is Extracellular. Residues 393–413 (FHTCVVIAAFVHYYGISEMAF) form a helical membrane-spanning segment. Over 414–423 (ARLNEQCPVR) the chain is Cytoplasmic.

It belongs to the ADIPOR family.

The protein localises to the membrane. In terms of biological role, probable receptor, which may be involved in metabolic pathways that regulate lipid metabolism such as fatty acid oxidation. In Caenorhabditis briggsae, this protein is Progestin and adipoQ receptor-like protein 1.